The following is a 78-amino-acid chain: Acyl carrier protein (78 aa).

Residues 4 to 78 (AEIRDKVYDI…QQAIDYIVKK (75 aa)) form the Carrier domain. An O-(pantetheine 4'-phosphoryl)serine modification is found at Ser39.

Belongs to the acyl carrier protein (ACP) family. Post-translationally, 4'-phosphopantetheine is transferred from CoA to a specific serine of apo-ACP by AcpS. This modification is essential for activity because fatty acids are bound in thioester linkage to the sulfhydryl of the prosthetic group.

It localises to the cytoplasm. Its pathway is lipid metabolism; fatty acid biosynthesis. Its function is as follows. Carrier of the growing fatty acid chain in fatty acid biosynthesis. The protein is Acyl carrier protein of Chlorobium luteolum (strain DSM 273 / BCRC 81028 / 2530) (Pelodictyon luteolum).